The primary structure comprises 134 residues: MDKEYLALLERAYTLVAPKAQRRTEIPKIQVENMPRKTIIPNFGAIAKRLNRDIYFMAKFFQKELAVPGTVEGDVFTLHGEKSPKVVEAVYERFIRYYVVCPVCNSIDTELRKEGRVFVMKCLACGASTPVKPL.

The protein belongs to the eIF-2-beta/eIF-5 family. Heterotrimer composed of an alpha, a beta and a gamma chain.

Its function is as follows. eIF-2 functions in the early steps of protein synthesis by forming a ternary complex with GTP and initiator tRNA. The sequence is that of Translation initiation factor 2 subunit beta from Pyrobaculum arsenaticum (strain DSM 13514 / JCM 11321 / PZ6).